Here is an 88-residue protein sequence, read N- to C-terminus: Small ribosomal subunit protein uS15c (88 aa).

It belongs to the universal ribosomal protein uS15 family. Part of the 30S ribosomal subunit.

It is found in the plastid. The protein localises to the chloroplast. The polypeptide is Small ribosomal subunit protein uS15c (rps15) (Aethionema cordifolium (Lebanon stonecress)).